Consider the following 116-residue polypeptide: Iron-sulfur cluster insertion protein ErpA (116 aa).

Residues Cys44, Cys108, and Cys110 each coordinate iron-sulfur cluster.

It belongs to the HesB/IscA family. In terms of assembly, homodimer. Iron-sulfur cluster is required as a cofactor.

Its function is as follows. Required for insertion of 4Fe-4S clusters for at least IspG. In Pseudomonas entomophila (strain L48), this protein is Iron-sulfur cluster insertion protein ErpA.